Consider the following 444-residue polypeptide: Phosphoglucosamine mutase (444 aa).

S100 acts as the Phosphoserine intermediate in catalysis. Mg(2+)-binding residues include S100, D234, D236, and D238. S100 bears the Phosphoserine mark.

The protein belongs to the phosphohexose mutase family. The cofactor is Mg(2+). Post-translationally, activated by phosphorylation.

The catalysed reaction is alpha-D-glucosamine 1-phosphate = D-glucosamine 6-phosphate. In terms of biological role, catalyzes the conversion of glucosamine-6-phosphate to glucosamine-1-phosphate. The sequence is that of Phosphoglucosamine mutase from Rubrobacter xylanophilus (strain DSM 9941 / JCM 11954 / NBRC 16129 / PRD-1).